A 314-amino-acid chain; its full sequence is WD repeat domain-containing protein 83 (314 aa).

WD repeat units lie at residues 23–62 (CNQGAVRAVRFNVDGNYCMTCGSDKTLKLWNPHKGTLLKT), 65–104 (GHGYEVLDTAGSYDNSQMCSCSSDKTVILWDVAQGQVVRK), 107–146 (GHAGKVNCVQFNEEATVIMSGSIDSSIRCWDCRSRRPEAI), 151–188 (EAKDGISSIKISDHEILAGSVDGNLRRYDLRKGEMCAD), 189–228 (YLGSPITCVSFSQDSQCLLASSLDSTLRLLDKDTGELLGE), 231–272 (GHQN…LVLK), and 275–313 (VGKAAVQSLSFHPSECCLLTASEGGVQLWRGASYEEEGG).

The protein belongs to the WD repeat MORG1 family.

The protein resides in the cytoplasm. Molecular scaffold protein for various multimeric protein complexes. Acts as a module in the assembly of a multicomponent scaffold for the ERK pathway, linking ERK responses to specific agonists. Also involved in response to hypoxia by acting as a negative regulator of HIF1A/HIF-1-alpha. This is WD repeat domain-containing protein 83 (wdr83) from Xenopus tropicalis (Western clawed frog).